Here is a 194-residue protein sequence, read N- to C-terminus: Ribonuclease HII (194 aa).

An RNase H type-2 domain is found at 1–194 (MTVGVDEVGR…RLFPRDDGLR (194 aa)). A divalent metal cation is bound by residues aspartate 6, glutamate 7, and aspartate 102.

It belongs to the RNase HII family. It depends on Mn(2+) as a cofactor. Mg(2+) serves as cofactor.

It is found in the cytoplasm. It catalyses the reaction Endonucleolytic cleavage to 5'-phosphomonoester.. In terms of biological role, endonuclease that specifically degrades the RNA of RNA-DNA hybrids. This Synechococcus sp. (strain WH7803) protein is Ribonuclease HII.